The chain runs to 142 residues: Large ribosomal subunit protein uL11 (142 aa).

Belongs to the universal ribosomal protein uL11 family. In terms of assembly, part of the ribosomal stalk of the 50S ribosomal subunit. Interacts with L10 and the large rRNA to form the base of the stalk. L10 forms an elongated spine to which L12 dimers bind in a sequential fashion forming a multimeric L10(L12)X complex. One or more lysine residues are methylated.

Forms part of the ribosomal stalk which helps the ribosome interact with GTP-bound translation factors. The sequence is that of Large ribosomal subunit protein uL11 from Hamiltonella defensa subsp. Acyrthosiphon pisum (strain 5AT).